We begin with the raw amino-acid sequence, 312 residues long: NADH-ubiquinone oxidoreductase chain 1 (312 aa).

8 consecutive transmembrane segments (helical) span residues 3-23, 77-97, 104-124, 150-170, 174-194, 226-246, 250-270, and 289-309; these read FILS…SVAF, ISPI…PFFV, LGGL…MVAG, LALI…VYFF, IYVW…TISL, LIFM…CVIF, DVFN…FIWA, and CFLS…ILLF.

Belongs to the complex I subunit 1 family.

The protein localises to the mitochondrion inner membrane. The catalysed reaction is a ubiquinone + NADH + 5 H(+)(in) = a ubiquinol + NAD(+) + 4 H(+)(out). Functionally, core subunit of the mitochondrial membrane respiratory chain NADH dehydrogenase (Complex I) that is believed to belong to the minimal assembly required for catalysis. Complex I functions in the transfer of electrons from NADH to the respiratory chain. The immediate electron acceptor for the enzyme is believed to be ubiquinone. This is NADH-ubiquinone oxidoreductase chain 1 (mt:ND1) from Drosophila subobscura (Fruit fly).